A 241-amino-acid polypeptide reads, in one-letter code: Co-chaperone protein p23-1 (241 aa).

The CS domain maps to serine 2–leucine 91. MGG repeat units lie at residues methionine 129 to glycine 131, methionine 132 to glycine 134, methionine 135 to glycine 137, methionine 138 to glycine 140, methionine 141 to glycine 143, methionine 144 to glycine 146, methionine 147 to glycine 149, methionine 150 to glycine 152, methionine 162 to glycine 164, methionine 165 to glycine 167, methionine 168 to glycine 170, methionine 171 to glycine 173, methionine 180 to glycine 182, methionine 183 to glycine 185, methionine 186 to glycine 188, methionine 189 to glycine 191, and methionine 192 to glycine 194. The tract at residues methionine 129–glycine 194 is 17 X 3 AA repeats of M-G-G. The segment at glycine 188–lysine 241 is disordered. Over residues glutamate 196–glutamate 206 the composition is skewed to acidic residues. Basic and acidic residues predominate over residues threonine 207–alanine 224. Positions threonine 225–threonine 234 are enriched in low complexity.

Belongs to the p23/wos2 family. As to quaternary structure, interacts with HSP90 in an ATP-dependent manner. Interacts with HSP90-5, HSP90-6 and HSP90-7. Widely expressed but preferentially in the root meristem.

It localises to the cytoplasm. The protein localises to the nucleus. Acts as a co-chaperone for HSP90. Controls root development through the modulation of auxin distribution in the root meristem. The chain is Co-chaperone protein p23-1 from Arabidopsis thaliana (Mouse-ear cress).